The sequence spans 305 residues: NAD-dependent protein deacylase SIR4 (305 aa).

Residues 1 to 10 (MSAQVMHNRV) constitute a mitochondrion transit peptide. The Deacetylase sirtuin-type domain occupies 11–305 (MGTVKDSASK…VLEELASTIR (295 aa)). Residues 37-57 (GAGV…GIYS) and 118-121 (QNVD) contribute to the NAD(+) site. H139 functions as the Proton acceptor in the catalytic mechanism. Positions 147, 150, 209, and 212 each coordinate Zn(2+). NAD(+) is bound by residues 249-251 (GSS), 275-277 (NLG), and S293.

This sequence belongs to the sirtuin family. Class II subfamily. Requires Zn(2+) as cofactor.

It localises to the mitochondrion matrix. The catalysed reaction is N(6)-acetyl-L-lysyl-[protein] + NAD(+) + H2O = 2''-O-acetyl-ADP-D-ribose + nicotinamide + L-lysyl-[protein]. In terms of biological role, NAD-dependent protein deacylase. Catalyzes the NAD-dependent hydrolysis of acyl groups from lysine residues. The protein is NAD-dependent protein deacylase SIR4 of Batrachochytrium dendrobatidis (strain JAM81 / FGSC 10211) (Frog chytrid fungus).